The chain runs to 207 residues: Redox-sensing transcriptional repressor Rex (207 aa).

Residues 17-56 constitute a DNA-binding region (H-T-H motif); that stretch reads IYLRYLSYLQQVEVTTVSSQQMGKNLDVNPAQIRKDLAAF. Position 91–96 (91–96) interacts with NAD(+); the sequence is GAGHLG.

The protein belongs to the transcriptional regulatory Rex family. Homodimer.

The protein resides in the cytoplasm. Its function is as follows. Modulates transcription in response to changes in cellular NADH/NAD(+) redox state. This Brevibacillus brevis (strain 47 / JCM 6285 / NBRC 100599) protein is Redox-sensing transcriptional repressor Rex.